The primary structure comprises 843 residues: RNA-binding protein 25 (843 aa).

The segment at 1–30 (MSFPPHLNRPPMGIPALPPGIPPPQFPGFP) is disordered. Pro residues predominate over residues 12–30 (MGIPALPPGIPPPQFPGFP). An RRM domain is found at 87–164 (TTVFVGNISE…KKLLVKVDAK (78 aa)). Lys135 carries the post-translational modification N6-acetyllysine. Disordered stretches follow at residues 171–202 (EWKAKKKASNGNARPETVTNDDEEALDEETKR) and 219–243 (SSELNAPSQESDSHPRKKKKEKKED). Ser226 and Ser229 each carry phosphoserine. Residues Lys261, Lys273, and Lys430 each participate in a glycyl lysine isopeptide (Lys-Gly) (interchain with G-Cter in SUMO2) cross-link. Basic and acidic residues-rich tracts occupy residues 280-433 (EISK…KRDR) and 521-573 (RLRD…ERRR). Disordered stretches follow at residues 280 to 442 (EISK…DAYE) and 498 to 688 (EFLE…KRKK). Residues 285–644 (RDTHKKLEEE…PNTPGDESPC (360 aa)) form a necessary for nuclear speckle localization region. Residue Lys578 forms a Glycyl lysine isopeptide (Lys-Gly) (interchain with G-Cter in SUMO2) linkage. Position 583 is a phosphoserine (Ser583). A compositionally biased stretch (basic and acidic residues) spans 590 to 599 (KQEKEEKREE). Positions 621 to 630 (SSAPSVSSAS) are enriched in low complexity. Lys671 participates in a covalent cross-link: Glycyl lysine isopeptide (Lys-Gly) (interchain with G-Cter in SUMO2). The span at 674 to 683 (ASNSPGQPNS) shows a compositional bias: polar residues. Phosphoserine is present on residues Ser677 and Ser683. Glycyl lysine isopeptide (Lys-Gly) (interchain with G-Cter in SUMO2) cross-links involve residues Lys688 and Lys697. Ser703 bears the Phosphoserine mark. Lys722 participates in a covalent cross-link: Glycyl lysine isopeptide (Lys-Gly) (interchain with G-Cter in SUMO2). Residues 750–843 (PELFAYPLDW…TEAKKIGLVK (94 aa)) enclose the PWI domain.

As to quaternary structure, interacts with LUC7L3 and SRRM1. Specifically associates with functional splicing complexes, including Sm proteins and U1, U2, U4, U5 and U6 snRNAs. Associates with exon junction complex (EJC) proteins, including APEX1, DDX39B, NCBP1, RBM8A and RNPS1. Interaction with NCBP1 is RNA-dependent. Post-translationally, sumoylated.

The protein localises to the nucleus speckle. It localises to the cytoplasm. Functionally, RNA-binding protein that acts as a regulator of alternative pre-mRNA splicing. Involved in apoptotic cell death through the regulation of the apoptotic factor BCL2L1 isoform expression. Modulates the ratio of proapoptotic BCL2L1 isoform S to antiapoptotic BCL2L1 isoform L mRNA expression. When overexpressed, stimulates proapoptotic BCL2L1 isoform S 5'-splice site (5'-ss) selection, whereas its depletion caused the accumulation of antiapoptotic BCL2L1 isoform L. Promotes BCL2L1 isoform S 5'-ss usage through the 5'-CGGGCA-3' RNA sequence. Its association with LUC7L3 promotes U1 snRNP binding to a weak 5' ss in a 5'-CGGGCA-3'-dependent manner. Binds to the exonic splicing enhancer 5'-CGGGCA-3' RNA sequence located within exon 2 of the BCL2L1 pre-mRNA. Also involved in the generation of an abnormal and truncated splice form of SCN5A in heart failure. This is RNA-binding protein 25 (RBM25) from Homo sapiens (Human).